The chain runs to 220 residues: Guanylate kinase (220 aa).

Positions 3–180 constitute a Guanylate kinase-like domain; it reads GRLFVMTGAS…AVADFLAILT (178 aa). Position 10–17 (10–17) interacts with ATP; it reads GASGVGKG.

This sequence belongs to the guanylate kinase family.

It is found in the cytoplasm. The enzyme catalyses GMP + ATP = GDP + ADP. In terms of biological role, essential for recycling GMP and indirectly, cGMP. This Thermus thermophilus (strain ATCC BAA-163 / DSM 7039 / HB27) protein is Guanylate kinase.